A 561-amino-acid chain; its full sequence is Potassium-transporting ATPase potassium-binding subunit (561 aa).

The next 11 membrane-spanning stretches (helical) occupy residues 5–25 (IELF…GTYM), 63–83 (KYAL…YFIL), 103–122 (LAFN…HYAG), 133–153 (IVIV…AAAI), 179–199 (LLPI…PQTF), 255–275 (IEML…GLMI), 281–301 (ALVL…GAVY), 380–400 (AGLQ…GLMV), 418–438 (LIAL…ALTV), 485–505 (IMTG…MLAV), and 531–551 (AIFI…AVIL).

Belongs to the KdpA family. The system is composed of three essential subunits: KdpA, KdpB and KdpC.

The protein resides in the cell membrane. Its function is as follows. Part of the high-affinity ATP-driven potassium transport (or Kdp) system, which catalyzes the hydrolysis of ATP coupled with the electrogenic transport of potassium into the cytoplasm. This subunit binds the extracellular potassium ions and delivers the ions to the membrane domain of KdpB through an intramembrane tunnel. The sequence is that of Potassium-transporting ATPase potassium-binding subunit from Caldanaerobacter subterraneus subsp. tengcongensis (strain DSM 15242 / JCM 11007 / NBRC 100824 / MB4) (Thermoanaerobacter tengcongensis).